Reading from the N-terminus, the 416-residue chain is Tryptophan synthase beta chain (416 aa).

N6-(pyridoxal phosphate)lysine is present on Lys109.

Belongs to the TrpB family. Tetramer of two alpha and two beta chains. Requires pyridoxal 5'-phosphate as cofactor.

The enzyme catalyses (1S,2R)-1-C-(indol-3-yl)glycerol 3-phosphate + L-serine = D-glyceraldehyde 3-phosphate + L-tryptophan + H2O. Its pathway is amino-acid biosynthesis; L-tryptophan biosynthesis; L-tryptophan from chorismate: step 5/5. In terms of biological role, the beta subunit is responsible for the synthesis of L-tryptophan from indole and L-serine. The polypeptide is Tryptophan synthase beta chain (Prochlorococcus marinus (strain SARG / CCMP1375 / SS120)).